The sequence spans 405 residues: Imidazolonepropionase (405 aa).

The Fe(3+) site is built by His-73 and His-75. Residues His-73 and His-75 each coordinate Zn(2+). Residues Arg-82, Tyr-145, and His-178 each coordinate 4-imidazolone-5-propanoate. Tyr-145 contributes to the N-formimidoyl-L-glutamate binding site. Position 243 (His-243) interacts with Fe(3+). Residue His-243 participates in Zn(2+) binding. Gln-246 contacts 4-imidazolone-5-propanoate. Asp-318 is a binding site for Fe(3+). Zn(2+) is bound at residue Asp-318. N-formimidoyl-L-glutamate contacts are provided by Asn-320 and Gly-322. Thr-323 contacts 4-imidazolone-5-propanoate.

This sequence belongs to the metallo-dependent hydrolases superfamily. HutI family. Zn(2+) serves as cofactor. Fe(3+) is required as a cofactor.

It is found in the cytoplasm. The catalysed reaction is 4-imidazolone-5-propanoate + H2O = N-formimidoyl-L-glutamate. The protein operates within amino-acid degradation; L-histidine degradation into L-glutamate; N-formimidoyl-L-glutamate from L-histidine: step 3/3. Its function is as follows. Catalyzes the hydrolytic cleavage of the carbon-nitrogen bond in imidazolone-5-propanoate to yield N-formimidoyl-L-glutamate. It is the third step in the universal histidine degradation pathway. In Brucella abortus (strain S19), this protein is Imidazolonepropionase.